The primary structure comprises 212 residues: Large ribosomal subunit protein uL3 (212 aa).

Residues Arg128 to Thr146 show a composition bias toward basic residues. Positions Arg128 to Pro164 are disordered.

It belongs to the universal ribosomal protein uL3 family. In terms of assembly, part of the 50S ribosomal subunit. Forms a cluster with proteins L14 and L19.

One of the primary rRNA binding proteins, it binds directly near the 3'-end of the 23S rRNA, where it nucleates assembly of the 50S subunit. This chain is Large ribosomal subunit protein uL3, found in Desulfitobacterium hafniense (strain Y51).